Consider the following 279-residue polypeptide: Acetyl-coenzyme A carboxylase carboxyl transferase subunit beta (279 aa).

Residues 23 to 279 (LWSKCDECGA…LIKLFKHLRG (257 aa)) form the CoA carboxyltransferase N-terminal domain. Zn(2+) contacts are provided by cysteine 27, cysteine 30, cysteine 46, and cysteine 49. The segment at 27 to 49 (CDECGAALHKKQLEDHLYTCPEC) adopts a C4-type zinc-finger fold.

The protein belongs to the AccD/PCCB family. Acetyl-CoA carboxylase is a heterohexamer composed of biotin carboxyl carrier protein (AccB), biotin carboxylase (AccC) and two subunits each of ACCase subunit alpha (AccA) and ACCase subunit beta (AccD). It depends on Zn(2+) as a cofactor.

The protein resides in the cytoplasm. The catalysed reaction is N(6)-carboxybiotinyl-L-lysyl-[protein] + acetyl-CoA = N(6)-biotinyl-L-lysyl-[protein] + malonyl-CoA. Its pathway is lipid metabolism; malonyl-CoA biosynthesis; malonyl-CoA from acetyl-CoA: step 1/1. Its function is as follows. Component of the acetyl coenzyme A carboxylase (ACC) complex. Biotin carboxylase (BC) catalyzes the carboxylation of biotin on its carrier protein (BCCP) and then the CO(2) group is transferred by the transcarboxylase to acetyl-CoA to form malonyl-CoA. The polypeptide is Acetyl-coenzyme A carboxylase carboxyl transferase subunit beta (Chlorobaculum parvum (strain DSM 263 / NCIMB 8327) (Chlorobium vibrioforme subsp. thiosulfatophilum)).